The primary structure comprises 101 residues: Phosphoprotein OPG062 (101 aa).

The segment at 50–73 is disordered; the sequence is KPSSPTCERRPSSPSRCERMNNPG. Residues 56 to 68 are compositionally biased toward basic and acidic residues; that stretch reads CERRPSSPSRCER.

This sequence belongs to the orthopoxvirus OPG062 family. In terms of assembly, self-associates to form high molecular-weight forms. Interacts with protein OPG157. Interacts with host RICTOR and RPTOR; these interactions disrupt the mTORC1 and mTORC2 crosstalk.

It is found in the virion. In terms of biological role, plays an essential role in virion assembly and morphogenesis. Also plays a role in the inhibition of host immune response by dysregulating mTOR. Sequesters host RICTOR and RPTOR, thereby disrupting mTORC1 and mTORC2 crosstalk. In turn, blocks the host antiviral response in part through mTOR-dependent degradation of cGAS, the primary poxvirus sensor. In Monkeypox virus, this protein is Phosphoprotein OPG062 (OPG062).